The primary structure comprises 288 residues: NAD(P)H-hydrate epimerase (288 aa).

Residues 1–47 constitute a mitochondrion transit peptide; it reads MSRLRALLGLGLLVAGSRVPRIKSQTIACRSGPTWWGPQRLNSGGRW. Phosphoserine is present on S49. Positions 65-275 constitute a YjeF N-terminal domain; the sequence is AQAVDQELFN…ALEKKYQLNL (211 aa). Position 119–123 (119–123) interacts with (6S)-NADPHX; the sequence is NNGGD. N120 is a K(+) binding site. Residue K144 is modified to N6-succinyllysine. Residue D185 participates in K(+) binding. (6S)-NADPHX-binding positions include 189 to 195 and D218; that span reads GFSFKGD. Position 221 (S221) interacts with K(+).

Belongs to the NnrE/AIBP family. As to quaternary structure, homodimer. Interacts with APOA1 and APOA2. K(+) serves as cofactor. Post-translationally, undergoes physiological phosphorylation during sperm capacitation, downstream to PKA activation. In terms of tissue distribution, ubiquitously expressed, with highest levels in kidney, heart and liver. Present in cerebrospinal fluid and urine but not in serum from healthy patients. Present in serum of sepsis patients (at protein level).

It localises to the mitochondrion. Its subcellular location is the secreted. It carries out the reaction (6R)-NADHX = (6S)-NADHX. The enzyme catalyses (6R)-NADPHX = (6S)-NADPHX. Catalyzes the epimerization of the S- and R-forms of NAD(P)HX, a damaged form of NAD(P)H that is a result of enzymatic or heat-dependent hydration. This is a prerequisite for the S-specific NAD(P)H-hydrate dehydratase to allow the repair of both epimers of NAD(P)HX. Accelerates cholesterol efflux from endothelial cells to high-density lipoprotein (HDL) and thereby regulates angiogenesis. The polypeptide is NAD(P)H-hydrate epimerase (Homo sapiens (Human)).